The chain runs to 549 residues: Zinc finger protein 18 (549 aa).

An SCAN box domain is found at 41-123 (RQLFRQFRYQ…TLVESLKGDP (83 aa)). The 73-residue stretch at 211-283 (DLGASLLPAA…YLHVNEKIPR (73 aa)) folds into the KRAB domain. C2H2-type zinc fingers lie at residues 408-430 (PTCRECGKTFYRNSQLIFHQRTH), 436-458 (FQCTICKKAFLRSSDFVKHQRTH), 464-486 (CKCDYCGKGFSDFSGLRHHEKIH), 492-514 (YKCPICEKSFIQRSNFNRHQRVH), and 520-542 (YKCSHCGKSFSWSSSLDKHQRSH).

The protein belongs to the krueppel C2H2-type zinc-finger protein family.

Its subcellular location is the nucleus. Functionally, may be involved in transcriptional regulation. The chain is Zinc finger protein 18 (ZNF18) from Homo sapiens (Human).